The sequence spans 510 residues: D-alanine--D-alanyl carrier protein ligase (510 aa).

ATP is bound at residue 157-158 (TS). D202 is a binding site for D-alanine. Position 297 to 302 (297 to 302 (NTYGPT)) interacts with ATP. A D-alanine-binding site is contributed by V306. ATP is bound by residues D389 and K498. K498 is a binding site for D-alanine.

It belongs to the ATP-dependent AMP-binding enzyme family. DltA subfamily.

It is found in the cytoplasm. The catalysed reaction is holo-[D-alanyl-carrier protein] + D-alanine + ATP = D-alanyl-[D-alanyl-carrier protein] + AMP + diphosphate. It functions in the pathway cell wall biogenesis; lipoteichoic acid biosynthesis. Functionally, catalyzes the first step in the D-alanylation of lipoteichoic acid (LTA), the activation of D-alanine and its transfer onto the D-alanyl carrier protein (Dcp) DltC. In an ATP-dependent two-step reaction, forms a high energy D-alanyl-AMP intermediate, followed by transfer of the D-alanyl residue as a thiol ester to the phosphopantheinyl prosthetic group of the Dcp. D-alanylation of LTA plays an important role in modulating the properties of the cell wall in Gram-positive bacteria, influencing the net charge of the cell wall. This Listeria monocytogenes serotype 4b (strain F2365) protein is D-alanine--D-alanyl carrier protein ligase.